The following is a 417-amino-acid chain: NADH-quinone oxidoreductase subunit D (417 aa).

The protein belongs to the complex I 49 kDa subunit family. NDH-1 is composed of 14 different subunits. Subunits NuoB, C, D, E, F, and G constitute the peripheral sector of the complex.

The protein localises to the cell inner membrane. It carries out the reaction a quinone + NADH + 5 H(+)(in) = a quinol + NAD(+) + 4 H(+)(out). Functionally, NDH-1 shuttles electrons from NADH, via FMN and iron-sulfur (Fe-S) centers, to quinones in the respiratory chain. The immediate electron acceptor for the enzyme in this species is believed to be ubiquinone. Couples the redox reaction to proton translocation (for every two electrons transferred, four hydrogen ions are translocated across the cytoplasmic membrane), and thus conserves the redox energy in a proton gradient. The protein is NADH-quinone oxidoreductase subunit D of Chromobacterium violaceum (strain ATCC 12472 / DSM 30191 / JCM 1249 / CCUG 213 / NBRC 12614 / NCIMB 9131 / NCTC 9757 / MK).